The primary structure comprises 69 residues: Putative membrane protein insertion efficiency factor (69 aa).

It belongs to the UPF0161 family.

The protein localises to the cell inner membrane. Its function is as follows. Could be involved in insertion of integral membrane proteins into the membrane. In Novosphingobium aromaticivorans (strain ATCC 700278 / DSM 12444 / CCUG 56034 / CIP 105152 / NBRC 16084 / F199), this protein is Putative membrane protein insertion efficiency factor.